Here is a 463-residue protein sequence, read N- to C-terminus: D-inositol 3-phosphate glycosyltransferase (463 aa).

Position 40 (histidine 40) interacts with 1D-myo-inositol 3-phosphate. Residues 46–47 (QP) and glycine 54 each bind UDP-N-acetyl-alpha-D-glucosamine. Residues 51–56 (DAGGMN), lysine 109, tyrosine 142, threonine 166, and arginine 186 each bind 1D-myo-inositol 3-phosphate. UDP-N-acetyl-alpha-D-glucosamine is bound by residues arginine 260, lysine 265, and glutamine 318. Residues phenylalanine 327, histidine 328, and valine 330 each contribute to the Mg(2+) site. UDP-N-acetyl-alpha-D-glucosamine is bound by residues glutamate 340 and glutamate 348. Threonine 354 contributes to the Mg(2+) binding site. The tract at residues 443 to 463 (VRDPVAARKPRRWTARRGVGA) is disordered.

This sequence belongs to the glycosyltransferase group 1 family. MshA subfamily. In terms of assembly, homodimer.

The enzyme catalyses 1D-myo-inositol 3-phosphate + UDP-N-acetyl-alpha-D-glucosamine = 1D-myo-inositol 2-acetamido-2-deoxy-alpha-D-glucopyranoside 3-phosphate + UDP + H(+). Functionally, catalyzes the transfer of a N-acetyl-glucosamine moiety to 1D-myo-inositol 3-phosphate to produce 1D-myo-inositol 2-acetamido-2-deoxy-glucopyranoside 3-phosphate in the mycothiol biosynthesis pathway. The protein is D-inositol 3-phosphate glycosyltransferase of Mycobacterium ulcerans (strain Agy99).